A 243-amino-acid chain; its full sequence is Proteasome subunit beta (243 aa).

Positions 1–40 (MRTPMNNDISGRPDSLNGDRSDVFSPELGEFPNADDRAND) are disordered. Residues 1–49 (MRTPMNNDISGRPDSLNGDRSDVFSPELGEFPNADDRANDIGDMETKTG) constitute a propeptide, removed in mature form; by autocatalysis. The active-site Nucleophile is the T50.

This sequence belongs to the peptidase T1B family. In terms of assembly, the 20S proteasome core is composed of 14 alpha and 14 beta subunits that assemble into four stacked heptameric rings, resulting in a barrel-shaped structure. The two inner rings, each composed of seven catalytic beta subunits, are sandwiched by two outer rings, each composed of seven alpha subunits. The catalytic chamber with the active sites is on the inside of the barrel. Has a gated structure, the ends of the cylinder being occluded by the N-termini of the alpha-subunits. Is capped at one or both ends by the proteasome regulatory ATPase, PAN.

The protein resides in the cytoplasm. The catalysed reaction is Cleavage of peptide bonds with very broad specificity.. With respect to regulation, the formation of the proteasomal ATPase PAN-20S proteasome complex, via the docking of the C-termini of PAN into the intersubunit pockets in the alpha-rings, triggers opening of the gate for substrate entry. Interconversion between the open-gate and close-gate conformations leads to a dynamic regulation of the 20S proteasome proteolysis activity. Functionally, component of the proteasome core, a large protease complex with broad specificity involved in protein degradation. This chain is Proteasome subunit beta, found in Haloquadratum walsbyi (strain DSM 16790 / HBSQ001).